The chain runs to 1057 residues: Carbamoyl phosphate synthase large chain (1057 aa).

Residues Met-1 to Glu-401 are carboxyphosphate synthetic domain. Positions 129, 169, 175, 176, 208, 210, 215, 241, 242, 243, 284, and 298 each coordinate ATP. Residues Arg-133–Val-327 form the ATP-grasp 1 domain. Mg(2+) is bound by residues Gln-284, Glu-298, and Asn-300. Mn(2+) contacts are provided by Gln-284, Glu-298, and Asn-300. An oligomerization domain region spans residues Tyr-402–Ser-546. Positions Ile-547–Gly-929 are carbamoyl phosphate synthetic domain. Residues Glu-671–Met-861 enclose the ATP-grasp 2 domain. ATP is bound by residues Arg-707, Arg-746, Leu-748, Glu-752, Gly-777, Val-778, His-779, Ser-780, Gln-820, and Glu-832. Mg(2+) is bound by residues Gln-820, Glu-832, and Asn-834. Gln-820, Glu-832, and Asn-834 together coordinate Mn(2+). One can recognise an MGS-like domain in the interval Phe-930–Val-1057. The segment at Phe-930–Val-1057 is allosteric domain.

It belongs to the CarB family. As to quaternary structure, composed of two chains; the small (or glutamine) chain promotes the hydrolysis of glutamine to ammonia, which is used by the large (or ammonia) chain to synthesize carbamoyl phosphate. Tetramer of heterodimers (alpha,beta)4. Requires Mg(2+) as cofactor. It depends on Mn(2+) as a cofactor.

The catalysed reaction is hydrogencarbonate + L-glutamine + 2 ATP + H2O = carbamoyl phosphate + L-glutamate + 2 ADP + phosphate + 2 H(+). It catalyses the reaction hydrogencarbonate + NH4(+) + 2 ATP = carbamoyl phosphate + 2 ADP + phosphate + 2 H(+). Its pathway is amino-acid biosynthesis; L-arginine biosynthesis; carbamoyl phosphate from bicarbonate: step 1/1. The protein operates within pyrimidine metabolism; UMP biosynthesis via de novo pathway; (S)-dihydroorotate from bicarbonate: step 1/3. Large subunit of the glutamine-dependent carbamoyl phosphate synthetase (CPSase). CPSase catalyzes the formation of carbamoyl phosphate from the ammonia moiety of glutamine, carbonate, and phosphate donated by ATP, constituting the first step of 2 biosynthetic pathways, one leading to arginine and/or urea and the other to pyrimidine nucleotides. The large subunit (synthetase) binds the substrates ammonia (free or transferred from glutamine from the small subunit), hydrogencarbonate and ATP and carries out an ATP-coupled ligase reaction, activating hydrogencarbonate by forming carboxy phosphate which reacts with ammonia to form carbamoyl phosphate. This chain is Carbamoyl phosphate synthase large chain, found in Staphylococcus epidermidis (strain ATCC 35984 / DSM 28319 / BCRC 17069 / CCUG 31568 / BM 3577 / RP62A).